We begin with the raw amino-acid sequence, 333 residues long: Cilia- and flagella-associated protein 119 (333 aa).

Over residues 1–10 (MITPSSSQSL) the composition is skewed to polar residues. Disordered stretches follow at residues 1–70 (MITP…ANLF) and 309–333 (RLSS…TKTK). The residue at position 34 (S34) is a Phosphoserine. The span at 44 to 58 (TDMQTESPAEATSSP) shows a compositional bias: polar residues. Positions 284 to 319 (IKSQLSKELRQLQQLVEERLKESEERLSSKLAALEQ) form a coiled coil.

It is found in the cell projection. The protein localises to the cilium. It localises to the flagellum. Its subcellular location is the cytoplasmic vesicle. The protein resides in the secretory vesicle. It is found in the acrosome. The protein localises to the cytoplasm. The protein is Cilia- and flagella-associated protein 119 of Mus musculus (Mouse).